The sequence spans 61 residues: Large ribosomal subunit protein uL29 (61 aa).

Belongs to the universal ribosomal protein uL29 family.

The sequence is that of Large ribosomal subunit protein uL29 from Xanthomonas campestris pv. campestris (strain 8004).